A 261-amino-acid polypeptide reads, in one-letter code: Ribosomal RNA small subunit methyltransferase A (261 aa).

Residues His12, Leu14, Gly39, Glu60, Asp81, and Asn104 each contribute to the S-adenosyl-L-methionine site.

The protein belongs to the class I-like SAM-binding methyltransferase superfamily. rRNA adenine N(6)-methyltransferase family. RsmA subfamily.

The protein localises to the cytoplasm. The enzyme catalyses adenosine(1518)/adenosine(1519) in 16S rRNA + 4 S-adenosyl-L-methionine = N(6)-dimethyladenosine(1518)/N(6)-dimethyladenosine(1519) in 16S rRNA + 4 S-adenosyl-L-homocysteine + 4 H(+). Functionally, specifically dimethylates two adjacent adenosines (A1518 and A1519) in the loop of a conserved hairpin near the 3'-end of 16S rRNA in the 30S particle. May play a critical role in biogenesis of 30S subunits. The chain is Ribosomal RNA small subunit methyltransferase A from Albidiferax ferrireducens (strain ATCC BAA-621 / DSM 15236 / T118) (Rhodoferax ferrireducens).